Consider the following 509-residue polypeptide: AAA ATPase forming ring-shaped complexes (509 aa).

Residues alanine 11–alanine 50 adopt a coiled-coil conformation. An ATP-binding site is contributed by glycine 236–leucine 241.

It belongs to the AAA ATPase family. Homohexamer. Assembles into a hexameric ring structure.

This is AAA ATPase forming ring-shaped complexes from Corynebacterium diphtheriae (strain ATCC 700971 / NCTC 13129 / Biotype gravis).